Consider the following 807-residue polypeptide: Probable phosphoketolase (807 aa).

This sequence belongs to the XFP family. Thiamine diphosphate is required as a cofactor.

The polypeptide is Probable phosphoketolase (Nitrosospira multiformis (strain ATCC 25196 / NCIMB 11849 / C 71)).